We begin with the raw amino-acid sequence, 303 residues long: Taste receptor type 2 member 13 (303 aa).

The Extracellular portion of the chain corresponds to 1 to 7 (MESALLS). Residues 8 to 28 (ILTLVIIAEFVIGNLSNGFXV) form a helical membrane-spanning segment. The Cytoplasmic portion of the chain corresponds to 29 to 55 (LINCIDWVSKRQLSSVDKILTFLAISR). The chain crosses the membrane as a helical span at residues 56–76 (IGLIWELLVSWFLGLHYLAIF). The Extracellular segment spans residues 77-85 (VSGTGLRIM). The helical transmembrane segment at 86 to 106 (IFSWVVSNHFSLWLATILSIF) threads the bilayer. Over 107 to 128 (YLLKIASFSSPAFLYLKWRVNQ) the chain is Cytoplasmic. A helical membrane pass occupies residues 129–149 (VILMILLGTLVFLFLNLIQIN). Topologically, residues 150–184 (IHIKDWLDRCERNTIWNFSMSGLPTFSVPVKFTMT) are extracellular. N166 carries an N-linked (GlcNAc...) asparagine glycan. A helical transmembrane segment spans residues 185 to 205 (MFSLAPFTVALISFLLLIFSL). Topologically, residues 206-232 (RKHLQKMQLNYKGHREPRTKAHINALK) are cytoplasmic. Residues 233-253 (IVISFLLLYASFFLCILISWI) traverse the membrane as a helical segment. Residues 254 to 261 (SELYQNTL) are Extracellular-facing. A helical membrane pass occupies residues 262–282 (IHMFCQTIGVFYPSSHSFLLI). Residues 283–303 (LGNPKLRQASLLVAAKVWAKR) are Cytoplasmic-facing.

The protein belongs to the G-protein coupled receptor T2R family.

The protein localises to the membrane. In terms of biological role, receptor that may play a role in the perception of bitterness and is gustducin-linked. May play a role in sensing the chemical composition of the gastrointestinal content. The activity of this receptor may stimulate alpha gustducin, mediate PLC-beta-2 activation and lead to the gating of TRPM5. The protein is Taste receptor type 2 member 13 (TAS2R13) of Papio hamadryas (Hamadryas baboon).